A 61-amino-acid chain; its full sequence is MDPNCSCAAGGSCTCAGSCKCKDCRCTSCKKSCCSCCPAGCARCAQGCICKGASDKCSCCA.

N-acetylmethionine is present on Met-1. The beta stretch occupies residues 1 to 29; that stretch reads MDPNCSCAAGGSCTCAGSCKCKDCRCTSC. A divalent metal cation-binding residues include Cys-5, Cys-7, Cys-13, Cys-15, Cys-19, Cys-21, Cys-24, Cys-26, Cys-29, Cys-33, Cys-34, Cys-36, Cys-37, Cys-41, Cys-44, Cys-48, Cys-50, Cys-57, Cys-59, and Cys-60. Positions 30–61 are alpha; sequence KKSCCSCCPAGCARCAQGCICKGASDKCSCCA.

Belongs to the metallothionein superfamily. Type 1 family. As to quaternary structure, monomer.

In terms of biological role, metallothioneins have a high content of cysteine residues that bind various heavy metals; these proteins are transcriptionally regulated by both heavy metals and glucocorticoids. The sequence is that of Metallothionein-2B (MT2B) from Sus scrofa (Pig).